Here is an 880-residue protein sequence, read N- to C-terminus: Pyruvate, phosphate dikinase (880 aa).

Residues 1 to 348 (MNKLIYYFGN…LYILQTRTAK (348 aa)) form an N-terminal region. ATP is bound at residue Arg97. The linker 1 stretch occupies residues 349-405 (RTAIAAINIAVQMVEEKLISKEQALMRIDPESLNQLLHTRIDYSKKLTAIAEGLPAS). Residues 406–503 (PGAATGIVVF…VIKQGDIITI (98 aa)) are central. Thr458 is modified (phosphothreonine; by PDRP1). The active-site Tele-phosphohistidine intermediate is the His460. A linker 2 region spans residues 504-538 (DGGSGKIFLGEMPLIQPTFSEESTLILDWADEISS). Residues 539 to 879 (LKVRANAETV…AAAQAKIKQG (341 aa)) form a C-terminal region. Residues Arg566, Arg622, Glu750, Gly771, Thr772, Asn773, and Asp774 each contribute to the substrate site. Glu750 contacts Mg(2+). Asp774 is a binding site for Mg(2+). The active-site Proton donor is the Cys836.

The protein belongs to the PEP-utilizing enzyme family. As to quaternary structure, homodimer. The cofactor is Mg(2+). Post-translationally, phosphorylation of Thr-458 in the dark inactivates the enzyme. Dephosphorylation upon light stimulation reactivates the enzyme.

It carries out the reaction pyruvate + phosphate + ATP = phosphoenolpyruvate + AMP + diphosphate + H(+). Activated by light-induced dephosphorylation. Inhibited by dark-induced phosphorylation. Both reactions are catalyzed by PDRP1. In terms of biological role, catalyzes the reversible phosphorylation of pyruvate and phosphate. The chain is Pyruvate, phosphate dikinase (ppdK) from Rickettsia typhi (strain ATCC VR-144 / Wilmington).